Here is a 348-residue protein sequence, read N- to C-terminus: 5-deoxyribose 1-phosphate isomerase (348 aa).

Substrate-binding positions include 49–51 (RGA), Arg92, and Gln199. Asp240 (proton donor) is an active-site residue. 250–251 (NK) contributes to the substrate binding site.

It belongs to the EIF-2B alpha/beta/delta subunits family. DrdI subfamily. As to quaternary structure, homodimer.

It catalyses the reaction 5-deoxy-alpha-D-ribose 1-phosphate = 5-deoxy-D-ribulose 1-phosphate. It carries out the reaction 5-(methylsulfanyl)-alpha-D-ribose 1-phosphate = 5-(methylsulfanyl)-D-ribulose 1-phosphate. It participates in carbohydrate degradation. Catalyzes the isomerization of 5-deoxy-alpha-D-ribose 1-phosphate to 5-deoxy-D-ribulose 1-phosphate, as part of a 5-deoxyribose salvage pathway that recycles this toxic radical SAM enzyme by-product to mainstream metabolites. Also seems to be able to catalyze the conversion of methylthioribose-1-phosphate (MTR-1-P) into methylthioribulose-1-phosphate (MTRu-1-P). However this enzyme may not function in methionine salvage in B.thuringiensis since it exists a paralog (MtnA) present in the methionine salvage pathway cluster. This is 5-deoxyribose 1-phosphate isomerase from Bacillus thuringiensis serovar kurstaki (strain ATCC 35866 / NRRL B-4488 / HD73).